Here is a 344-residue protein sequence, read N- to C-terminus: Heat-inducible transcription repressor HrcA (344 aa).

It belongs to the HrcA family.

In terms of biological role, negative regulator of class I heat shock genes (grpE-dnaK-dnaJ and groELS operons). Prevents heat-shock induction of these operons. The protein is Heat-inducible transcription repressor HrcA of Streptococcus pneumoniae (strain Taiwan19F-14).